The primary structure comprises 348 residues: MNHYLRAIGSMLILVYSMLTAFLFIDKVFVNIIYFQGMFYTQIFGIPVFLFLNLVIILLCIIVGSILAYKINQQNQWIKSQIEHAIEGETVGINDQNIELYNETIDLYQTLVPLNQELHRLRMKTQNLTNENYNMNDVKVKKIIENERQRLARELHDSVSQQLFAASMMLSAIKETKLEAPLDQQIPVLEKMVQESQLEMRALLLHLRPLGLKDKSLGEGIKDLVIDLQKKVPMKVIHDIQDFKVPKGIEDHLFRITQEAISNTLRHSNGTKVTVELFNQQDYLLLRIQDNGKGFNVDEKLEQSYGLKNMRERALEIGATFHIVSLPDSGTRIEVKAPLNREDDNNDD.

Helical transmembrane passes span isoleucine 13–isoleucine 33 and isoleucine 43–valine 63. The Histidine kinase domain occupies arginine 150 to arginine 341.

Its subcellular location is the cell membrane. The catalysed reaction is ATP + protein L-histidine = ADP + protein N-phospho-L-histidine.. Member of the two-component regulatory system VraS/VraR involved in the control of the cell wall peptidoglycan biosynthesis. Probably activates VraR by phosphorylation. In Staphylococcus haemolyticus (strain JCSC1435), this protein is Sensor protein VraS (vraS).